The following is a 502-amino-acid chain: D-erythritol 1-phosphate dehydrogenase (502 aa).

8 to 36 (DLFVIGGGINGAGVARDAAGRGLKVVLAE) contacts FAD.

Belongs to the FAD-dependent glycerol-3-phosphate dehydrogenase family. FAD is required as a cofactor.

The catalysed reaction is D-erythritol 1-phosphate + NADP(+) = D-erythrulose 1-phosphate + NADPH + H(+). It functions in the pathway carbohydrate metabolism; erythritol degradation. In terms of biological role, catalyzes the oxydation of D-erythritol 1-phosphate to D-erythrulose 1-phosphate. This Brucella abortus (strain 2308) protein is D-erythritol 1-phosphate dehydrogenase.